A 60-amino-acid chain; its full sequence is MDHRLLEIIACPVCNGKLWYNQEKQELICKLDNLAFPLRDGIPVLLENEARSLTSDESKS.

The protein belongs to the UPF0434 family.

In Salmonella arizonae (strain ATCC BAA-731 / CDC346-86 / RSK2980), this protein is UPF0434 protein YcaR.